Reading from the N-terminus, the 232-residue chain is Ovalbumin-related protein X (232 aa).

Belongs to the serpin family. Ov-serpin subfamily. In terms of tissue distribution, expressed in egg white (at protein level).

In Gallus gallus (Chicken), this protein is Ovalbumin-related protein X (SERPINB14C).